A 347-amino-acid chain; its full sequence is Probable ribonucleotide transport ATP-binding protein mkl (347 aa).

The ABC transporter domain occupies 16-252 (IEVKGLTKSF…DEPVVRQFLN (237 aa)). Residue 48-55 (GPSGTGKS) coordinates ATP.

Belongs to the ABC transporter superfamily.

In terms of biological role, not known, could be involved in the transport of ribonucleotides. The polypeptide is Probable ribonucleotide transport ATP-binding protein mkl (mkl) (Mycobacterium leprae (strain TN)).